A 203-amino-acid polypeptide reads, in one-letter code: ATP-dependent Clp protease proteolytic subunit (203 aa).

Residue serine 107 is the Nucleophile of the active site. Residue histidine 132 is part of the active site.

It belongs to the peptidase S14 family. Fourteen ClpP subunits assemble into 2 heptameric rings which stack back to back to give a disk-like structure with a central cavity, resembling the structure of eukaryotic proteasomes.

The protein localises to the cytoplasm. It carries out the reaction Hydrolysis of proteins to small peptides in the presence of ATP and magnesium. alpha-casein is the usual test substrate. In the absence of ATP, only oligopeptides shorter than five residues are hydrolyzed (such as succinyl-Leu-Tyr-|-NHMec, and Leu-Tyr-Leu-|-Tyr-Trp, in which cleavage of the -Tyr-|-Leu- and -Tyr-|-Trp bonds also occurs).. In terms of biological role, cleaves peptides in various proteins in a process that requires ATP hydrolysis. Has a chymotrypsin-like activity. Plays a major role in the degradation of misfolded proteins. The protein is ATP-dependent Clp protease proteolytic subunit of Shewanella sediminis (strain HAW-EB3).